The following is a 168-amino-acid chain: ATP synthase subunit b (168 aa).

A helical membrane pass occupies residues 11 to 31 (NTVLGNIIVVSGAFIILLVLL).

This sequence belongs to the ATPase B chain family. F-type ATPases have 2 components, F(1) - the catalytic core - and F(0) - the membrane proton channel. F(1) has five subunits: alpha(3), beta(3), gamma(1), delta(1), epsilon(1). F(0) has three main subunits: a(1), b(2) and c(10-14). The alpha and beta chains form an alternating ring which encloses part of the gamma chain. F(1) is attached to F(0) by a central stalk formed by the gamma and epsilon chains, while a peripheral stalk is formed by the delta and b chains.

It is found in the cell membrane. Its function is as follows. F(1)F(0) ATP synthase produces ATP from ADP in the presence of a proton or sodium gradient. F-type ATPases consist of two structural domains, F(1) containing the extramembraneous catalytic core and F(0) containing the membrane proton channel, linked together by a central stalk and a peripheral stalk. During catalysis, ATP synthesis in the catalytic domain of F(1) is coupled via a rotary mechanism of the central stalk subunits to proton translocation. Component of the F(0) channel, it forms part of the peripheral stalk, linking F(1) to F(0). The sequence is that of ATP synthase subunit b from Lactococcus lactis subsp. lactis (strain IL1403) (Streptococcus lactis).